The following is a 240-amino-acid chain: uncharacterized protein (240 aa).

Residues 3–27 form a C2H2-type zinc finger; that stretch reads LKCLECDKLLSSIEMAEFHSTKTSH. Disordered stretches follow at residues 21–43 and 120–171; these read HSTK…RSPE and AEIE…RFSI. The segment covering 120–136 has biased composition (basic and acidic residues); it reads AEIERDKKRRAAERENK. Over residues 155 to 166 the composition is skewed to low complexity; sequence SSSTCTRTPPTS.

This is an uncharacterized protein from Schizosaccharomyces pombe (strain 972 / ATCC 24843) (Fission yeast).